A 238-amino-acid polypeptide reads, in one-letter code: RNA-free ribonuclease P (238 aa).

The protein belongs to the HARP family.

It catalyses the reaction Endonucleolytic cleavage of RNA, removing 5'-extranucleotides from tRNA precursor.. RNA-free RNase P that catalyzes the removal of the 5'-leader sequence from pre-tRNA to produce the mature 5'-terminus. The polypeptide is RNA-free ribonuclease P (Hyperthermus butylicus (strain DSM 5456 / JCM 9403 / PLM1-5)).